A 407-amino-acid chain; its full sequence is Tyrosine--tRNA ligase (407 aa).

Tyr-35 contributes to the L-tyrosine binding site. The 'HIGH' region signature appears at 40-49 (PTADSLHVGH). Residues Tyr-168 and Gln-172 each coordinate L-tyrosine. The 'KMSKS' region motif lies at 228–232 (KMGKT). Lys-231 is a binding site for ATP. The 65-residue stretch at 341–405 (NLLVDLLVKC…RGKKNFNRIV (65 aa)) folds into the S4 RNA-binding domain.

This sequence belongs to the class-I aminoacyl-tRNA synthetase family. TyrS type 1 subfamily. Homodimer.

The protein localises to the cytoplasm. It carries out the reaction tRNA(Tyr) + L-tyrosine + ATP = L-tyrosyl-tRNA(Tyr) + AMP + diphosphate + H(+). Its function is as follows. Catalyzes the attachment of tyrosine to tRNA(Tyr) in a two-step reaction: tyrosine is first activated by ATP to form Tyr-AMP and then transferred to the acceptor end of tRNA(Tyr). The chain is Tyrosine--tRNA ligase from Clostridium botulinum (strain ATCC 19397 / Type A).